Reading from the N-terminus, the 201-residue chain is Small ribosomal subunit protein uS5 (201 aa).

A disordered region spans residues 1 to 28 (MAHQNEQRGGGDRGRGRGRGRDRDQERD). An S5 DRBM domain is found at 31-94 (LVDKLVHINR…DEAKKNMIRV (64 aa)). A disordered region spans residues 173–201 (SVAAKRGLKVGDLVNRRDDGASSPEAIEA).

Belongs to the universal ribosomal protein uS5 family. In terms of assembly, part of the 30S ribosomal subunit. Contacts proteins S4 and S8.

Functionally, with S4 and S12 plays an important role in translational accuracy. Located at the back of the 30S subunit body where it stabilizes the conformation of the head with respect to the body. The protein is Small ribosomal subunit protein uS5 of Maricaulis maris (strain MCS10) (Caulobacter maris).